A 441-amino-acid chain; its full sequence is Importin subunit alpha-8 (441 aa).

8 ARM repeats span residues 39–79 (QRDI…NIAV), 80–118 (DNPG…NVAG), 121–158 (IHYR…NLCR), 160–199 (KPHP…HLSE), 202–241 (EDGI…AMTA), 244–284 (HQQT…NITA), 287–326 (KEQI…NMAL), and 330–370 (HDQI…NMLK).

The protein belongs to the importin alpha family. Forms a complex with importin subunit beta-1.

It localises to the nucleus envelope. Its function is as follows. Binds to conventional NLS motifs and mediates nuclear protein import across the nuclear envelope. This is Importin subunit alpha-8 from Arabidopsis thaliana (Mouse-ear cress).